Here is a 75-residue protein sequence, read N- to C-terminus: Small, acid-soluble spore protein Tlp (75 aa).

The protein belongs to the Tlp family.

The protein resides in the spore core. The polypeptide is Small, acid-soluble spore protein Tlp (Geobacillus kaustophilus (strain HTA426)).